A 141-amino-acid polypeptide reads, in one-letter code: Hemoglobin subunit alpha-D (141 aa).

In terms of domain architecture, Globin spans 1-141 (MLNAEDKKLI…VSAVLAEKYR (141 aa)). Residues histidine 58 and histidine 87 each contribute to the heme b site.

Belongs to the globin family. Heterotetramer of two alpha-D chains and two beta chains. As to expression, red blood cells.

Involved in oxygen transport from the lung to the various peripheral tissues. This chain is Hemoglobin subunit alpha-D (HBAD), found in Phasianus colchicus colchicus (Black-necked pheasant).